The primary structure comprises 1036 residues: KAT8 regulatory NSL complex subunit 1 (1036 aa).

The residue at position 104 (K104) is an N6-acetyllysine. Disordered regions lie at residues 145-211 and 226-257; these read GQTA…CTLP and NSTANKSSVNSMDQPALQGSSRLSPSTDSSSN. The span at 226–244 shows a compositional bias: polar residues; that stretch reads NSTANKSSVNSMDQPALQG. Positions 245–256 are enriched in low complexity; sequence SSRLSPSTDSSS. Phosphoserine is present on S249. Residue K262 forms a Glycyl lysine isopeptide (Lys-Gly) (interchain with G-Cter in SUMO2) linkage. S268 is modified (phosphoserine). Residues 285–312 are a coiled coil; that stretch reads TALLRRQADIEIRARRLQKRLQVVQAKQ. Residue K331 forms a Glycyl lysine isopeptide (Lys-Gly) (interchain with G-Cter in SUMO2) linkage. 2 disordered regions span residues 399 to 423 and 739 to 787; these read DSDVTDSSSGGESDIEEEELTRADP and SPSY…RRRG. The segment covering 759–772 has biased composition (low complexity); it reads STSSDTSTPTSSGS. The required for activation of KAT8 histone acetyltransferase activity stretch occupies residues 781–813; it reads PVRRRRGESSFDINNIVIPMSVAATTRVEKLQY. The 152-residue stretch at 815 to 966 folds into the PEHE domain; sequence EILTPSWREV…GLDEQSVQPW (152 aa). The tract at residues 841 to 859 is interaction with KAT8 HAT domain; sequence EDLSDAAFAALHAKCEEME. The tract at residues 869 to 931 is disordered; that stretch reads VPPQRRGSRS…SPISPELHSA (63 aa). The span at 886 to 896 shows a compositional bias: polar residues; the sequence is TTPQLGSANPS. Low complexity predominate over residues 906–919; the sequence is SSSHSLSEFSHGQS. Residues S922 and S925 each carry the phosphoserine modification. At T934 the chain carries Phosphothreonine. Phosphoserine is present on S976. The segment at 989 to 1020 is disordered; sequence DTAARCTRRTSGSKTGREAEVAPTSPPVVPLK.

As to quaternary structure, component of the NSL complex at least composed of MOF/KAT8, KANSL1, KANSL2, KANSL3, MCRS1, PHF20, OGT1/OGT, WDR5 and HCFC1. Interacts (via PEHE domain) with KAT8 (via HAT domain); the interaction is direct. Component of some MLL1/MLL complex, at least composed of the core components KMT2A/MLL1, ASH2L, HCFC1, WDR5 and RBBP5, as well as the facultative components BACC1, CHD8, E2F6, HSP70, INO80C, KANSL1, LAS1L, MAX, MCRS1, MGA, KAT8/MOF, PELP1, PHF20, PRP31, RING2, RUVB1/TIP49A, RUVB2/TIP49B, SENP3, TAF1, TAF4, TAF6, TAF7, TAF9 and TEX10.

The protein resides in the nucleus. It localises to the chromosome. The protein localises to the centromere. It is found in the kinetochore. Its subcellular location is the mitochondrion. The protein resides in the cytoplasm. It localises to the cytoskeleton. The protein localises to the spindle pole. Functionally, non-catalytic component of the NSL histone acetyltransferase complex, a multiprotein complex that mediates histone H4 acetylation at 'Lys-5'- and 'Lys-8' (H4K5ac and H4K8ac) at transcription start sites and promotes transcription initiation. The NSL complex also acts as a regulator of gene expression in mitochondria. In addition to its role in transcription, KANSL1 also plays an essential role in spindle assembly during mitosis. Associates with microtubule ends and contributes to microtubule stability. The chain is KAT8 regulatory NSL complex subunit 1 (Kansl1) from Mus musculus (Mouse).